The following is a 368-amino-acid chain: Peptide chain release factor 2 (368 aa).

Residue Gln-249 is modified to N5-methylglutamine.

The protein belongs to the prokaryotic/mitochondrial release factor family. Methylated by PrmC. Methylation increases the termination efficiency of RF2.

Its subcellular location is the cytoplasm. In terms of biological role, peptide chain release factor 2 directs the termination of translation in response to the peptide chain termination codons UGA and UAA. The chain is Peptide chain release factor 2 from Rhodococcus jostii (strain RHA1).